Consider the following 238-residue polypeptide: Probable xyloglucan-specific endo-beta-1,4-glucanase A (238 aa).

Residues 1-18 (MKLSLSVALSLAAATAQA) form the signal peptide. 2 N-linked (GlcNAc...) asparagine glycosylation sites follow: N106 and N171.

Belongs to the glycosyl hydrolase 12 (cellulase H) family.

It is found in the secreted. It catalyses the reaction xyloglucan + H2O = xyloglucan oligosaccharides.. Functionally, catalyzes endohydrolysis of 1,4-beta-D-glucosidic linkages in xyloglucan with retention of the beta-configuration of the glycosyl residues. Specific for xyloglucan and does not hydrolyze other cell wall components. The sequence is that of Probable xyloglucan-specific endo-beta-1,4-glucanase A (xgeA) from Aspergillus fumigatus (strain CBS 144.89 / FGSC A1163 / CEA10) (Neosartorya fumigata).